The sequence spans 193 residues: Adenylate kinase (193 aa).

11 to 16 (GSGKGT) is a binding site for ATP. The segment at 31 to 60 (STGDIFRANVKGETPLGLEAKKYMDAGDYV) is NMP. AMP contacts are provided by residues Thr-32, Arg-37, 58 to 60 (DYV), 86 to 89 (GYPR), and Gln-93. The LID stretch occupies residues 127-137 (GRAKESGRSDD). Residue Arg-128 participates in ATP binding. AMP contacts are provided by Arg-134 and Arg-145. Residue Gly-173 participates in ATP binding.

It belongs to the adenylate kinase family. As to quaternary structure, monomer.

It localises to the cytoplasm. It catalyses the reaction AMP + ATP = 2 ADP. The protein operates within purine metabolism; AMP biosynthesis via salvage pathway; AMP from ADP: step 1/1. Its function is as follows. Catalyzes the reversible transfer of the terminal phosphate group between ATP and AMP. Plays an important role in cellular energy homeostasis and in adenine nucleotide metabolism. The protein is Adenylate kinase of Renibacterium salmoninarum (strain ATCC 33209 / DSM 20767 / JCM 11484 / NBRC 15589 / NCIMB 2235).